The following is a 361-amino-acid chain: Tyrosine--tRNA ligase (361 aa).

The L-tyrosine site is built by Y36, Y162, Q166, D169, and Q184. Positions 235–239 match the 'KMSKS' region motif; that stretch reads KMSKS. Position 238 (K238) interacts with ATP.

The protein belongs to the class-I aminoacyl-tRNA synthetase family. TyrS type 4 subfamily. Homodimer.

It localises to the cytoplasm. The catalysed reaction is tRNA(Tyr) + L-tyrosine + ATP = L-tyrosyl-tRNA(Tyr) + AMP + diphosphate + H(+). Its function is as follows. Catalyzes the attachment of tyrosine to tRNA(Tyr) in a two-step reaction: tyrosine is first activated by ATP to form Tyr-AMP and then transferred to the acceptor end of tRNA(Tyr). In Sulfolobus acidocaldarius (strain ATCC 33909 / DSM 639 / JCM 8929 / NBRC 15157 / NCIMB 11770), this protein is Tyrosine--tRNA ligase.